The chain runs to 479 residues: Serine protease HTRA1A (479 aa).

The first 18 residues, 1 to 18 (MILVTLFCICALVTSLQA), serve as a signal peptide directing secretion. The 85-residue stretch at 27-111 (VIGGCPSHCD…RGKQGVCVCK (85 aa)) folds into the IGFBP N-terminal domain. 6 disulfides stabilise this stretch: Cys-31/Cys-56, Cys-35/Cys-58, Cys-40/Cys-59, Cys-47/Cys-62, Cys-70/Cys-87, and Cys-81/Cys-108. The Kazal-like domain maps to 96-155 (SATVRRRGKQGVCVCKSSDPVCGSDGVSYRDICELKRVSNRAQSLQQPPVLFIQRGACGT). The interval 203–363 (GSGFVVSDDG…IPSDKIRQFL (161 aa)) is serine protease. Active-site charge relay system residues include His-219, Asp-249, and Ser-327. The PDZ domain occupies 364–466 (AESYDRLARG…LRVVVRRGNE (103 aa)).

It belongs to the peptidase S1C family. In terms of assembly, forms homotrimers. In the presence of substrate, may form higher-order multimers in a PDZ-independent manner.

It is found in the secreted. Its subcellular location is the cytoplasm. It localises to the cytosol. Serine protease with a variety of targets, including extracellular matrix proteins and proteoglycans. Through cleavage of proteoglycans, may release soluble FGF-glycosaminoglycan complexes that promote the range and intensity of FGF signals in the extracellular space. Regulates the availability of insulin-like growth factors (IGFs) by cleaving IGF-binding proteins. Inhibits signaling mediated by TGF-beta family members. Consequently, may regulate many physiological processes. Intracellularly, degrades TSC2, leading to the activation of TSC2 downstream targets. The polypeptide is Serine protease HTRA1A (htra1a) (Danio rerio (Zebrafish)).